An 87-amino-acid chain; its full sequence is Omega-lycotoxin-Am1a (87 aa).

Positions 1 to 17 (MKLSIFFVLFFIAIAYC) are cleaved as a signal peptide. Residues 18 to 40 (QPEFLDDEEDEVEETLPVAEEGR) constitute a propeptide that is removed on maturation. 4 cysteine pairs are disulfide-bonded: C44/C59, C51/C64, C58/C84, and C66/C82.

Belongs to the neurotoxin omega-lctx family. As to expression, expressed by the venom gland.

The protein localises to the secreted. In terms of biological role, modulates Cav2.1/CACNA1A voltage-gated calcium channels (P/Q-type currents) in rat cerebellar Purkinje cells and hippocampal CA1-CA3 neurons. At saturating concentrations (&gt;10 nM) decelerates activation kinetics and slightly increases peak amplitude without affecting deactivation kinetics. In vivo, does not cause death when intravenously injected into mice. In rat models, through its activity on Cav2.1/CACNA1A, has an ameliorative effect on memory defects provoked by hyperstimulation of N-methyl-D-aspartate receptors (NMDARs) in the hippocampus. This is Omega-lycotoxin-Am1a from Alopecosa marikovskyi (Wolf spider).